Here is a 423-residue protein sequence, read N- to C-terminus: MFSVNKRTQAFSVFLFFFSVPKVIRYLNKQRSLKEEEKRLEEFQLLLSKLKDVHLPLDLIVEILKKLPTKSLMRFRCVSKPWSFIISKRRDFVESIMARSLRQPPHKLPVFIFHQCDPGTFFTVSSTFSQSTKPKVSIMPGRNHYNAFRYQYVRGFICCSSSVYDLVTIYNPTTRQCLPLPKIESMVLSPKRHKHCYFGYDHVMNEYKVLAMVNDSQELTQTFHVFTLGRDCPQWRKIRGNIDYELISVSRAGVCIDGTIYYVAVRRKDNENYGELFMMSFDVKSERFYHVRTPETLWSPKCTERGLFNHQGKLGCISSNENNISMWIMENAEKQEWSNITFGLLEYPGGDFRTFSGITPAGEIFSMCYPFYNMPLCVHYYNVKQKSYRRVEIESTRLKTRKQPRDIIRVFAIHDFVENTMWL.

Residues 49 to 95 (KLKDVHLPLDLIVEILKKLPTKSLMRFRCVSKPWSFIISKRRDFVES) enclose the F-box domain.

This is F-box protein At1g52495 from Arabidopsis thaliana (Mouse-ear cress).